Reading from the N-terminus, the 58-residue chain is ILSFVFACLLALSAVSAAPEPRWKVFKKIEKMGRNIRDGIVKAGPAIEVLGSAKALGK.

The first 21 residues, 1-21 (ILSFVFACLLALSAVSAAPEP), serve as a signal peptide directing secretion.

It belongs to the cecropin family.

Its subcellular location is the secreted. In terms of biological role, cecropins have lytic and antibacterial activity against several Gram-positive and Gram-negative bacteria. This is Cecropin-B (CECB) from Spodoptera litura (Asian cotton leafworm).